The primary structure comprises 360 residues: Homeobox protein ceh-60 (360 aa).

The PBC-A stretch occupies residues 1–82 (MDNLIKQLQM…ENPTFPLEEV (82 aa)). The 179-residue stretch at 1-179 (MDNLIKQLQM…ILVLRREIEQ (179 aa)) folds into the PBC domain. The segment at 85–179 (EKDEEWQPLE…ILVLRREIEQ (95 aa)) is PBC-B. A DNA-binding region (homeobox) is located at residues 180 to 242 (QGRKRRNFDK…NQRIRTKQQA (63 aa)).

The protein belongs to the TALE/PBX homeobox family. In terms of assembly, forms a heterodimer with homeobox unc-62. Interacts with pqm-1.

Its subcellular location is the nucleus. Its function is as follows. Probable transcription regulator which binds to DNA, repressing genes involved in longevity and stress, while activating genes involved in reproduction, such as the vitellogenins. Associates with homeobox unc-62 to regulate gene expression, including repression of genes involved in innate immunity. Required for intestinal expression of vitellogenin genes. Negatively modulates longevity, probably independently of effects on vitellogenesis. Involved in lipid homeostasis, contributing to the reallocation of intestinal lipids to the germline and to the formation of the cuticle. Associates with transcriptional regulator pqm-1 at the daf-16 associated element within the promoters of stress-responsive genes to regulate expression. In Caenorhabditis elegans, this protein is Homeobox protein ceh-60.